Consider the following 316-residue polypeptide: Small kinetochore-associated protein (316 aa).

Serine 128 is modified (phosphoserine). An interaction with SPAG5 region spans residues 159 to 316 (VRKGYKPLSK…LKEMEQLLEM (158 aa)). 2 coiled-coil regions span residues 166 to 216 (LSKQ…FRDN) and 248 to 316 (SMLL…LLEM).

As to quaternary structure, part of an astrin (SPAG5)-kinastrin (SKAP) complex containing KNSTRN, SPAG5, PLK1, DYNLL1 and SGO2. Interacts with SPAG5. Directly binds to microtubules, although at relatively low affinity. Interacts with CENPE; this interaction greatly favors microtubule-binding. Interacts with DSN1/MIS13; leading to localization to kinetochores. Interacts with MAPRE1/EB1; leading to localization to the microtubule plus ends. Interacts with PRPF19. Interacts with DYNLL1. Interacts with MAP4. As to expression, widely expressed, including in skin.

It localises to the nucleus. The protein resides in the chromosome. Its subcellular location is the centromere. The protein localises to the kinetochore. It is found in the cytoplasm. It localises to the cytoskeleton. The protein resides in the spindle pole. Its subcellular location is the microtubule organizing center. Functionally, essential component of the mitotic spindle required for faithful chromosome segregation and progression into anaphase. Promotes the metaphase-to-anaphase transition and is required for chromosome alignment, normal timing of sister chromatid segregation, and maintenance of spindle pole architecture. The astrin (SPAG5)-kinastrin (SKAP) complex promotes stable microtubule-kinetochore attachments. Required for kinetochore oscillations and dynamics of microtubule plus-ends during live cell mitosis, possibly by forming a link between spindle microtubule plus-ends and mitotic chromosomes to achieve faithful cell division. May be involved in UV-induced apoptosis via its interaction with PRPF19; however, these results need additional evidences. This chain is Small kinetochore-associated protein, found in Homo sapiens (Human).